The following is a 710-amino-acid chain: Subtilisin-like protease SBT4.8 (710 aa).

Residues 1 to 23 (MVKRASFCLLSCLIILFLSSVSA) form the signal peptide. The propeptide at 24 to 111 (IIYDPQDKQV…VFRSKNYKLQ (88 aa)) is activation peptide. In terms of domain architecture, Inhibitor I9 spans 33-110 (VYVVYMGSLP…SVFRSKNYKL (78 aa)). The Peptidase S8 domain occupies 115–559 (SWDFMGMKEG…AGHVDPIAAI (445 aa)). Asp-143 serves as the catalytic Charge relay system. A glycan (N-linked (GlcNAc...) asparagine) is linked at Asn-174. His-198 functions as the Charge relay system in the catalytic mechanism. N-linked (GlcNAc...) asparagine glycosylation is found at Asn-221, Asn-364, and Asn-419. The PA domain occupies 354 to 414 (KYPLEYGDYL…VLSQDDFDSL (61 aa)). The Charge relay system role is filled by Ser-498. N-linked (GlcNAc...) asparagine glycans are attached at residues Asn-535, Asn-568, Asn-580, Asn-618, and Asn-636.

Belongs to the peptidase S8 family. The C-terminal propeptide is autocleaved.

Its subcellular location is the secreted. The sequence is that of Subtilisin-like protease SBT4.8 from Arabidopsis thaliana (Mouse-ear cress).